The primary structure comprises 252 residues: MASIHIETTGNGPDLVMLHGWAMHSGVWDGVVESLSQRFRLHQVDLPGHGASRDCALDSLDQMTEVIADRLPGRYSVCGWSLGGQVAIRLALQAPERVQQLVLVASTPCFVRRADWPWGMEDSTLTLFMENLARDYTQTLNRFLTLQVSGSEDQARVLAWLRKSILRGQPPTPATLQAGLKILQTSDLRAELNQVSQPVLLIHGRNDVITPAGAADWMQQHLPRARLVLFPHCGHAPFLSFPEQFVSCFDAL.

The AB hydrolase-1 domain occupies 15–239; sequence LVMLHGWAMH…FPHCGHAPFL (225 aa). Substrate contacts are provided by residues Trp-21, 81–82, and 143–147; these read SL and FLTLQ. Catalysis depends on Ser-81, which acts as the Nucleophile. Active-site residues include Asp-207 and His-235. Substrate is bound at residue His-235.

This sequence belongs to the AB hydrolase superfamily. Carboxylesterase BioH family. In terms of assembly, monomer.

Its subcellular location is the cytoplasm. The enzyme catalyses 6-carboxyhexanoyl-[ACP] methyl ester + H2O = 6-carboxyhexanoyl-[ACP] + methanol + H(+). It functions in the pathway cofactor biosynthesis; biotin biosynthesis. Functionally, the physiological role of BioH is to remove the methyl group introduced by BioC when the pimeloyl moiety is complete. It allows to synthesize pimeloyl-ACP via the fatty acid synthetic pathway through the hydrolysis of the ester bonds of pimeloyl-ACP esters. This chain is Pimeloyl-[acyl-carrier protein] methyl ester esterase, found in Nitrosomonas europaea (strain ATCC 19718 / CIP 103999 / KCTC 2705 / NBRC 14298).